A 182-amino-acid chain; its full sequence is Ribosome maturation factor RimM (182 aa).

Residues 103-182 (EDEFYWRELF…RIEVDWDPGF (80 aa)) form the PRC barrel domain.

Belongs to the RimM family. As to quaternary structure, binds ribosomal protein uS19.

Its subcellular location is the cytoplasm. Its function is as follows. An accessory protein needed during the final step in the assembly of 30S ribosomal subunit, possibly for assembly of the head region. Essential for efficient processing of 16S rRNA. May be needed both before and after RbfA during the maturation of 16S rRNA. It has affinity for free ribosomal 30S subunits but not for 70S ribosomes. The sequence is that of Ribosome maturation factor RimM from Vibrio parahaemolyticus serotype O3:K6 (strain RIMD 2210633).